The primary structure comprises 1250 residues: Protein suppressor of variegation 3-7 (1250 aa).

Disordered stretches follow at residues 107-148 (LNNP…HSYH) and 160-186 (HDPG…GGMR). Over residues 132–141 (STKTEPSSDA) the composition is skewed to polar residues. Residues 164 to 175 (DSQDDDDEDDES) are compositionally biased toward acidic residues. Residues Ser-165, Ser-175, and Ser-176 each carry the phosphoserine modification. C2H2-type zinc fingers lie at residues 217-236 (CLYC…IQQH), 319-343 (CRIC…TKGH), 425-446 (CTLC…TRAH), and 487-512 (CSVC…SEKH). A compositionally biased stretch (basic and acidic residues) spans 343–354 (HMEALRNLDSDK). Residues 343-398 (HMEALRNLDSDKRSRKRKRSKSNSVTNSGGDEAEREKESEPEVGPEDAQDTPVVMM) form a disordered region. The tract at residues 525 to 564 (VGSADGRGGDNMDEEEAAASDQAQSSQTDDSEDNDDDNWS) is disordered. Residues 543 to 552 (ASDQAQSSQT) show a composition bias toward low complexity. Residues 553–563 (DDSEDNDDDNW) show a composition bias toward acidic residues. The C2H2-type 5 zinc-finger motif lies at 605-629 (QICKFCRVRFHNEAAKARHELSARH). The disordered stretch occupies residues 642–684 (KLHQGTNTQTKHNAQDDEESQEQDEEYGEEEEDAEEDSQSNFD). Acidic residues predominate over residues 657–679 (DDEESQEQDEEYGEEEEDAEEDS). 2 consecutive C2H2-type zinc fingers follow at residues 737 to 761 (CKLC…TSRH) and 829 to 852 (CRVC…SRKH). A compositionally biased stretch (basic and acidic residues) spans 851 to 860 (KHVENKERQR). Positions 851–915 (KHVENKERQR…PLAKRSRRSM (65 aa)) are disordered. 2 positions are modified to phosphoserine: Ser-871 and Ser-873. The span at 879–897 (DAERQESGMDKESENDMSV) shows a compositional bias: basic and acidic residues. A Phosphoserine modification is found at Ser-975. Residues 987–1026 (RHVMDLFFDSISPTMKSLPPDLAAEGKSKIMQLVCSLELR) enclose the BESS domain. Residues 1032–1055 (ATTPTPATVSASSKWPSSTTVTPV) are compositionally biased toward low complexity. 4 disordered regions span residues 1032 to 1060 (ATTP…TPPA), 1079 to 1116 (TTPH…NGSA), 1154 to 1180 (QSRT…ADLS), and 1205 to 1236 (NTPQ…NGCQ). Polar residues-rich tracts occupy residues 1079–1091 (TTPH…QNNN) and 1104–1114 (GASSAQVTING). The segment covering 1206-1224 (TPQMQQPQQAQASITSSTP) has biased composition (low complexity).

Interacts with Su(var)39 through the BESS domain.

It is found in the nucleus. Functionally, dose-limiting factor in position-effect variegation, the inactivation in some cells of a gene translocated next to heterochromatin. It could play a role in chromosome condensation. The protein is Protein suppressor of variegation 3-7 (Su(var)3-7) of Drosophila melanogaster (Fruit fly).